Here is a 635-residue protein sequence, read N- to C-terminus: MHGLLLAAGLLSLPLHVLAHPQPSTSTSLAGRAGAVDLNEFRIAHRSSYTSHDEMKKLPSIASFRQGTYLEVATELVKQTIPNMEFRLVDDHYVGDSGIGHVRFRQTMHGIDIDNSDFNVNVGKDGKVLSHGNSFYTGPAPSSNPMVKRDFIDPMQALHGVRKALNLPIKADGAHVEDMSEHKVMFKGTSGALSDPTAKLCYMAKEDGSLALTWRVETDIGDNWLLSYMDAKESSKVHNVVDYVAHATFQVYKWGLADPTEGKREILTNPWNLKTSPLTWLSDGQNNFTATRGNNAIAQYNPDGGNDYENNYRPSPKNLKFEYPYSPDMNPPKTYIDASVTELFYTSNVCHDLYYMLGFNEKAGNFQVNNRGQGGKGNDFVILNAQDGSGTNNANFATPPDGQPGRMRAYIWTRANPPRDASFEAGTIIHEYTHGLSNRLCGGPANSRCLNAIESGGMGEGWGDFYATAVRLKPNDTRKTNYVKGGWVNNSPKGVRMYPYSTDMNVNPLVYTSNNKLNEVHAIGTVWCTMLYEVLWNLIDKHGKNDGPVPIFENGVPNDGKYLAMKIVMDGMAIQPCNPNFVQARDAILDADMNLTKGANKCEIWKGFAKRGLGVGAKFDPKNRTGSTQVPNECK.

The N-terminal stretch at 1–19 is a signal peptide; sequence MHGLLLAAGLLSLPLHVLA. Positions 20-246 are excised as a propeptide; sequence HPQPSTSTSL…VHNVVDYVAH (227 aa). A glycan (N-linked (GlcNAc...) asparagine) is linked at asparagine 287. Histidine 430 serves as a coordination point for Zn(2+). The active site involves glutamate 431. Zn(2+) is bound at residue histidine 434. Residues asparagine 475, asparagine 594, and asparagine 623 are each glycosylated (N-linked (GlcNAc...) asparagine).

It belongs to the peptidase M36 family. Zn(2+) is required as a cofactor.

Its subcellular location is the secreted. Its function is as follows. Secreted metalloproteinase probably acting as a virulence factor. The chain is Probable extracellular metalloproteinase 1 (MEP1) from Trichophyton verrucosum (strain HKI 0517).